The primary structure comprises 307 residues: Agmatinase (307 aa).

Mn(2+) contacts are provided by H126, D149, H151, D153, D230, and D232.

Belongs to the arginase family. Agmatinase subfamily. The cofactor is Mn(2+).

The catalysed reaction is agmatine + H2O = urea + putrescine. It participates in amine and polyamine biosynthesis; putrescine biosynthesis via agmatine pathway; putrescine from agmatine: step 1/1. Its function is as follows. Catalyzes the formation of putrescine from agmatine. This chain is Agmatinase, found in Sodalis glossinidius (strain morsitans).